Consider the following 762-residue polypeptide: 5-methyltetrahydropteroyltriglutamate--homocysteine methyltransferase (762 aa).

5-methyltetrahydropteroyltri-L-glutamate-binding positions include 17–20 (REWK) and lysine 111. L-homocysteine-binding positions include 435 to 437 (IGS) and glutamate 488. L-methionine is bound by residues 435–437 (IGS) and glutamate 488. Residues 519–520 (RC) and tryptophan 565 contribute to the 5-methyltetrahydropteroyltri-L-glutamate site. Aspartate 603 contacts L-homocysteine. Residue aspartate 603 coordinates L-methionine. A 5-methyltetrahydropteroyltri-L-glutamate-binding site is contributed by glutamate 609. Histidine 645, cysteine 647, and glutamate 669 together coordinate Zn(2+). Residue histidine 698 is the Proton donor of the active site. Residue cysteine 730 coordinates Zn(2+).

It belongs to the vitamin-B12 independent methionine synthase family. It depends on Zn(2+) as a cofactor.

It carries out the reaction 5-methyltetrahydropteroyltri-L-glutamate + L-homocysteine = tetrahydropteroyltri-L-glutamate + L-methionine. Its pathway is amino-acid biosynthesis; L-methionine biosynthesis via de novo pathway; L-methionine from L-homocysteine (MetE route): step 1/1. In terms of biological role, catalyzes the transfer of a methyl group from 5-methyltetrahydrofolate to homocysteine resulting in methionine formation. This Bacillus anthracis (strain A0248) protein is 5-methyltetrahydropteroyltriglutamate--homocysteine methyltransferase.